A 623-amino-acid polypeptide reads, in one-letter code: F-box protein FBX14 (623 aa).

The segment at 18 to 48 (LNLNPPCSSSSSSSSAATFTNKSRNFKSSPP) is disordered. The span at 33–45 (AATFTNKSRNFKS) shows a compositional bias: polar residues. Residues 54–97 (VLENVLENVLQFLTSRCDRNAVSLVCRSWYRVEAQTRLEVFIGN) enclose the F-box domain. 1D-myo-inositol hexakisphosphate is bound at residue Lys119. Positions 126–127 (DF) are interaction with auxin-responsive proteins. 1D-myo-inositol hexakisphosphate is bound by residues 158 to 159 (KR) and Arg391. Residues 394-399 (PFDPRE) form an interaction with auxin-responsive proteins region. 1D-myo-inositol hexakisphosphate is bound at residue 447–449 (VFR). An interaction with auxin-responsive proteins region spans residues 451 to 455 (CIMGR). Residue Arg482 participates in 1D-myo-inositol hexakisphosphate binding. The interaction with auxin-responsive proteins stretch occupies residues 510–511 (AF). 1D-myo-inositol hexakisphosphate contacts are provided by residues 530–531 (QK) and Arg555.

Part of a SCF (SKP1-cullin-F-box) protein ligase complex. May interact with auxin and auxin-responsive proteins.

It is found in the nucleus. Its pathway is protein modification; protein ubiquitination. The protein is F-box protein FBX14 (FBX14) of Arabidopsis thaliana (Mouse-ear cress).